A 959-amino-acid polypeptide reads, in one-letter code: Translation initiation factor IF-2 (959 aa).

Residues 1–10 (MSDKTNDDKT) show a composition bias toward basic and acidic residues. The segment at 1-374 (MSDKTNDDKT…SQMQETREKI (374 aa)) is disordered. A compositionally biased stretch (polar residues) spans 27 to 37 (EQSTVRQNFSH). Low complexity-rich tracts occupy residues 63 to 118 (AAAA…VTKP) and 128 to 138 (QRPGGQQAQRP). 2 stretches are compositionally biased toward basic and acidic residues: residues 154-225 (SEMD…EAAK) and 232-241 (ARSERRDDAR). Low complexity predominate over residues 246-284 (GARPQQAGRPQGGRPQPAGRPQQGSPRPAPIIADAAPIA). The span at 318–333 (PEVRAPKVVKGEDDRR) shows a compositional bias: basic and acidic residues. In terms of domain architecture, tr-type G spans 457–626 (SRPPVVTIMG…LLQAEMLDLK (170 aa)). The interval 466 to 473 (GHVDHGKT) is G1. 466–473 (GHVDHGKT) contributes to the GTP binding site. The tract at residues 491-495 (GITQH) is G2. The G3 stretch occupies residues 512 to 515 (DTPG). GTP contacts are provided by residues 512–516 (DTPGH) and 566–569 (NKID). Residues 566–569 (NKID) are G4. The segment at 602 to 604 (SAK) is G5.

The protein belongs to the TRAFAC class translation factor GTPase superfamily. Classic translation factor GTPase family. IF-2 subfamily.

Its subcellular location is the cytoplasm. One of the essential components for the initiation of protein synthesis. Protects formylmethionyl-tRNA from spontaneous hydrolysis and promotes its binding to the 30S ribosomal subunits. Also involved in the hydrolysis of GTP during the formation of the 70S ribosomal complex. The sequence is that of Translation initiation factor IF-2 from Brucella abortus (strain 2308).